The sequence spans 224 residues: MLLARAFARRSLRAGLWCRQKHTLPDLPYDYGALEPTISAEIMQLHHSKHHQTYVNNLNVAEEKLAEAKEKGDVSTIISLAPALRFNGGGHINHSIFWQNLSADGGEPEGELLAAINRDFGSVENMKNQLSAQTVAVQGSGWGWLGYIAEGALQIATCPNQDPLEATTGLVPLFGIDVWEHAYYLQYKNVRRIMLKPSGISLIGRISLQGSMQQSKNATSCSGA.

Residues 1 to 20 (MLLARAFARRSLRAGLWCRQ) constitute a mitochondrion transit peptide. Mn(2+) contacts are provided by histidine 46, histidine 94, aspartate 177, and histidine 181.

Belongs to the iron/manganese superoxide dismutase family. Homotetramer. Requires Mn(2+) as cofactor.

It is found in the mitochondrion matrix. It carries out the reaction 2 superoxide + 2 H(+) = H2O2 + O2. In terms of biological role, destroys superoxide anion radicals which are normally produced within the cells and which are toxic to biological systems. The chain is Superoxide dismutase [Mn], mitochondrial from Charybdis feriata (Crucifix crab).